The chain runs to 338 residues: Limbic system-associated membrane protein (338 aa).

Residues 1–28 form the signal peptide; it reads MVARAQPDRKQLPLVLLRLLCLLPTGLP. Ig-like C2-type domains lie at 29 to 122, 132 to 214, and 219 to 306; these read VRSV…PKTS, PKIS…VRVT, and PTIT…LYLY. 4 N-linked (GlcNAc...) asparagine glycosylation sites follow: Asn40, Asn66, Asn136, and Asn148. Cys53 and Cys111 are joined by a disulfide. Disulfide bonds link Cys153–Cys197 and Cys239–Cys290. N-linked (GlcNAc...) asparagine glycosylation is found at Asn279, Asn287, Asn300, and Asn315. A lipid anchor (GPI-anchor amidated asparagine) is attached at Asn315. The propeptide at 316-338 is removed in mature form; that stretch reads GSVSLAVPLWLLAASLLCLLSKC.

Belongs to the immunoglobulin superfamily. IgLON family.

The protein resides in the cell membrane. Its function is as follows. Mediates selective neuronal growth and axon targeting. Probably serves as a recognition molecule for the formation of limbic connections. The protein is Limbic system-associated membrane protein of Gallus gallus (Chicken).